A 354-amino-acid polypeptide reads, in one-letter code: GTPase Obg (354 aa).

Positions 1–159 (MKFLDQCKIY…LWVWLRLKLI (159 aa)) constitute an Obg domain. In terms of domain architecture, OBG-type G spans 160 to 328 (ADVGLVGLPN…LLRAAFTQVR (169 aa)). Residues 166 to 173 (GLPNAGKS), 191 to 195 (FTTLT), 213 to 216 (DIPG), 280 to 283 (NKVD), and 309 to 311 (SGV) contribute to the GTP site. Mg(2+) contacts are provided by Ser-173 and Thr-193. A disordered region spans residues 333–354 (ETPAEAAIDEAPEEETPGGWQP). Over residues 339–348 (AIDEAPEEET) the composition is skewed to acidic residues.

It belongs to the TRAFAC class OBG-HflX-like GTPase superfamily. OBG GTPase family. As to quaternary structure, monomer. Mg(2+) is required as a cofactor.

Its subcellular location is the cytoplasm. Its function is as follows. An essential GTPase which binds GTP, GDP and possibly (p)ppGpp with moderate affinity, with high nucleotide exchange rates and a fairly low GTP hydrolysis rate. Plays a role in control of the cell cycle, stress response, ribosome biogenesis and in those bacteria that undergo differentiation, in morphogenesis control. This is GTPase Obg from Caulobacter sp. (strain K31).